The chain runs to 181 residues: Ankyrin repeat-containing protein YGL242C (181 aa).

An N-acetylmethionine modification is found at Met1. ANK repeat units follow at residues Leu49–Ile78 and Asp85–Val120. Residues Ile151–Lys181 are disordered. The segment covering Asn160–Lys181 has biased composition (acidic residues). Ser172 carries the post-translational modification Phosphoserine.

In Saccharomyces cerevisiae (strain ATCC 204508 / S288c) (Baker's yeast), this protein is Ankyrin repeat-containing protein YGL242C.